Reading from the N-terminus, the 288-residue chain is Acetyl-coenzyme A carboxylase carboxyl transferase subunit beta (288 aa).

In terms of domain architecture, CoA carboxyltransferase N-terminal spans 30–288; sequence IMTKCPKCKK…KMHQEVKTNA (259 aa). The Zn(2+) site is built by Cys34, Cys37, Cys53, and Cys56. A C4-type zinc finger spans residues 34 to 56; it reads CPKCKKIMYTKELAENLNVCFNC.

This sequence belongs to the AccD/PCCB family. As to quaternary structure, acetyl-CoA carboxylase is a heterohexamer composed of biotin carboxyl carrier protein (AccB), biotin carboxylase (AccC) and two subunits each of ACCase subunit alpha (AccA) and ACCase subunit beta (AccD). Zn(2+) serves as cofactor.

Its subcellular location is the cytoplasm. It catalyses the reaction N(6)-carboxybiotinyl-L-lysyl-[protein] + acetyl-CoA = N(6)-biotinyl-L-lysyl-[protein] + malonyl-CoA. It functions in the pathway lipid metabolism; malonyl-CoA biosynthesis; malonyl-CoA from acetyl-CoA: step 1/1. In terms of biological role, component of the acetyl coenzyme A carboxylase (ACC) complex. Biotin carboxylase (BC) catalyzes the carboxylation of biotin on its carrier protein (BCCP) and then the CO(2) group is transferred by the transcarboxylase to acetyl-CoA to form malonyl-CoA. This Staphylococcus saprophyticus subsp. saprophyticus (strain ATCC 15305 / DSM 20229 / NCIMB 8711 / NCTC 7292 / S-41) protein is Acetyl-coenzyme A carboxylase carboxyl transferase subunit beta.